Here is a 353-residue protein sequence, read N- to C-terminus: Photosystem II protein D1 (353 aa).

T2 carries the post-translational modification N-acetylthreonine. T2 carries the post-translational modification Phosphothreonine. 3 consecutive transmembrane segments (helical) span residues 29–46 (YIGW…TATS), 118–133 (HFFL…EWEL), and 142–156 (WIAV…AATA). Chlorophyll a is bound at residue H118. Position 126 (Y126) interacts with pheophytin a. Residues D170 and E189 each coordinate [CaMn4O5] cluster. A helical membrane pass occupies residues 197-218 (FHMLGVAGVFGGSLFSAMHGSL). H198 lines the chlorophyll a pocket. Residues H215 and 264–265 (SF) each bind a quinone. Fe cation is bound at residue H215. H272 is a binding site for Fe cation. A helical membrane pass occupies residues 274 to 288 (FLAAWPVVGIWFTAL). H332, E333, D342, and A344 together coordinate [CaMn4O5] cluster. The propeptide occupies 345 to 353 (SVEAPSVNA).

It belongs to the reaction center PufL/M/PsbA/D family. As to quaternary structure, PSII is composed of 1 copy each of membrane proteins PsbA, PsbB, PsbC, PsbD, PsbE, PsbF, PsbH, PsbI, PsbJ, PsbK, PsbL, PsbM, PsbT, PsbX, PsbY, PsbZ, Psb30/Ycf12, at least 3 peripheral proteins of the oxygen-evolving complex and a large number of cofactors. It forms dimeric complexes. The D1/D2 heterodimer binds P680, chlorophylls that are the primary electron donor of PSII, and subsequent electron acceptors. It shares a non-heme iron and each subunit binds pheophytin, quinone, additional chlorophylls, carotenoids and lipids. D1 provides most of the ligands for the Mn4-Ca-O5 cluster of the oxygen-evolving complex (OEC). There is also a Cl(-1) ion associated with D1 and D2, which is required for oxygen evolution. The PSII complex binds additional chlorophylls, carotenoids and specific lipids. serves as cofactor. Post-translationally, the 9 C-terminal residues are removed, probably by CTPA (AC O04073); processing is essential to allow assembly of the oxygen-evolving complex and thus photosynthetic growth. In terms of processing, tyr-161 forms a radical intermediate that is referred to as redox-active TyrZ, YZ or Y-Z.

It is found in the plastid. The protein localises to the chloroplast thylakoid membrane. The enzyme catalyses 2 a plastoquinone + 4 hnu + 2 H2O = 2 a plastoquinol + O2. Its function is as follows. Photosystem II (PSII) is a light-driven water:plastoquinone oxidoreductase that uses light energy to abstract electrons from H(2)O, generating O(2) and a proton gradient subsequently used for ATP formation. It consists of a core antenna complex that captures photons, and an electron transfer chain that converts photonic excitation into a charge separation. The D1/D2 (PsbA/PsbD) reaction center heterodimer binds P680, the primary electron donor of PSII as well as several subsequent electron acceptors. In Tetradesmus obliquus (Green alga), this protein is Photosystem II protein D1.